An 89-amino-acid chain; its full sequence is Phosphoribulokinase, chloroplastic (89 aa).

The tract at residues 1–22 is disordered; that stretch reads LTSVFGGAAEPPRGGNPDSNTL.

It belongs to the phosphoribulokinase family.

The protein resides in the plastid. It is found in the chloroplast. It catalyses the reaction D-ribulose 5-phosphate + ATP = D-ribulose 1,5-bisphosphate + ADP + H(+). It participates in carbohydrate biosynthesis; Calvin cycle. With respect to regulation, light regulated via thioredoxin by reversible oxidation/reduction of sulfhydryl/disulfide groups. The chain is Phosphoribulokinase, chloroplastic from Vitis sp. (Grape).